The primary structure comprises 415 residues: MELRVGNRYRLGRKIGSGSFGDIYLGTDIAAGEEVAIKLECVKTKHPQLHIESKIYKMMQGGVGIPTIRWCGAEGDYNVMVMELLGPSLEDLFNFCSRKFSLKTVLLLADQMISRIEYIHSKNFIHRDVKPDNFLMGLGKKGNLVYIIDFGLAKKYRDARTHQHIPYRENKNLTGTARYASINTHLGIEQSRRDDLESLGYVLMYFNLGSLPWQGLKAATKRQKYERISEKKMSTPIEVLCKGYPSEFATYLNFCRSLRFDDKPDYSYLRQLFRNLFHRQGFSYDYVFDWNMLKFGASRAADDAERERRDREERLRHSRNPATRGLPSTASGRLRGTQEVAPPTPLTPTSHTANTSPRPVSGMERERKVSMRLHRGAPVNVSSSDLTGRQDTSRMSTSQIPGRVASSGLQSVVHR.

The Protein kinase domain maps to 9–277 (YRLGRKIGSG…YLRQLFRNLF (269 aa)). ATP-binding positions include 15–23 (IGSGSFGDI) and Lys38. The active-site Proton acceptor is Asp128. The centrosomal localization signal (CLS) stretch occupies residues 278-364 (HRQGFSYDYV…TSPRPVSGME (87 aa)). The segment covering 301 to 315 (ADDAERERRDREERL) has biased composition (basic and acidic residues). The tract at residues 301-415 (ADDAERERRD…SSGLQSVVHR (115 aa)) is disordered. An autoinhibitory region spans residues 317–342 (HSRNPATRGLPSTASGRLRGTQEVAP). 2 positions are modified to phosphoserine: Ser328 and Ser331. Positions 347–358 (TPTSHTANTSPR) are enriched in polar residues. Position 370 is a phosphoserine (Ser370). Arg375 is modified (omega-N-methylarginine). The segment covering 380–400 (NVSSSDLTGRQDTSRMSTSQI) has biased composition (polar residues). Residues Ser382, Ser383, Ser384, Pro401, Ser407, and Ser411 each carry the phosphoserine modification.

This sequence belongs to the protein kinase superfamily. CK1 Ser/Thr protein kinase family. Casein kinase I subfamily. Monomer. Component of the circadian core oscillator, which includes the CRY proteins, CLOCK, or NPAS2, BMAL1 or BMAL2, CSNK1D and/or CSNK1E, TIMELESS and the PER proteins. Interacts directly with PER1 and PER2 which may lead to their degradation. Interacts with MAP1A. Interacts with MAPT/TAU, DBNDD2, AIB1/NCOA3 and ESR1. Interacts with AKAP9/AKAP450; this interaction promotes centrosomal subcellular location. Binds to tubulins in mitotic cells upon DNA damage. Interacts with GJA1. Interacts with SNAPIN. Interacts with DNMT1. Interacts with DDX3X; this interaction enhances CSNK1D kinase activity in vitro, but it is unclear whether this interaction is physiologically relevant. Interacts with FAM83A, FAM83B, FAM83E and FAM83H (via DUF1669). Post-translationally, autophosphorylated on serine and threonine residues; this autophosphorylation represses activity. Reactivated by phosphatase-mediated dephosphorylation. May be dephosphorylated by PP1. As to expression, expressed ubiquitously. However, kinase activity is not uniform, with highest kinase activity in splenocytes.

Its subcellular location is the cytoplasm. It localises to the nucleus. It is found in the cytoskeleton. The protein localises to the microtubule organizing center. The protein resides in the centrosome. Its subcellular location is the perinuclear region. It localises to the cell membrane. It is found in the spindle. The protein localises to the golgi apparatus. It carries out the reaction L-seryl-[protein] + ATP = O-phospho-L-seryl-[protein] + ADP + H(+). The enzyme catalyses L-threonyl-[protein] + ATP = O-phospho-L-threonyl-[protein] + ADP + H(+). It catalyses the reaction L-seryl-[tau protein] + ATP = O-phospho-L-seryl-[tau protein] + ADP + H(+). The catalysed reaction is L-threonyl-[tau protein] + ATP = O-phospho-L-threonyl-[tau protein] + ADP + H(+). With respect to regulation, exhibits substrate-dependent heparin activation. Drug-mediated inhibition leads to a delay of the oscillations with the magnitude of this effect dependent upon the timing of drug administration. Inhibited by phosphorylation. Functionally, essential serine/threonine-protein kinase that regulates diverse cellular growth and survival processes including Wnt signaling, DNA repair and circadian rhythms. It can phosphorylate a large number of proteins. Casein kinases are operationally defined by their preferential utilization of acidic proteins such as caseins as substrates. Phosphorylates connexin-43/GJA1, MAP1A, SNAPIN, MAPT/TAU, TOP2A, DCK, HIF1A, EIF6, p53/TP53, DVL2, DVL3, ESR1, AIB1/NCOA3, DNMT1, PKD2, YAP1, PER1 and PER2. Central component of the circadian clock. In balance with PP1, determines the circadian period length through the regulation of the speed and rhythmicity of PER1 and PER2 phosphorylation. Controls PER1 and PER2 nuclear transport and degradation. YAP1 phosphorylation promotes its SCF(beta-TRCP) E3 ubiquitin ligase-mediated ubiquitination and subsequent degradation. DNMT1 phosphorylation reduces its DNA-binding activity. Phosphorylation of ESR1 and AIB1/NCOA3 stimulates their activity and coactivation. Phosphorylation of DVL2 and DVL3 regulates WNT3A signaling pathway that controls neurite outgrowth. Phosphorylates NEDD9/HEF1. EIF6 phosphorylation promotes its nuclear export. Triggers down-regulation of dopamine receptors in the forebrain. Activates DCK in vitro by phosphorylation. TOP2A phosphorylation favors DNA cleavable complex formation. May regulate the formation of the mitotic spindle apparatus in extravillous trophoblast. Modulates connexin-43/GJA1 gap junction assembly by phosphorylation. Probably involved in lymphocyte physiology. Regulates fast synaptic transmission mediated by glutamate. This is Casein kinase I isoform delta (Csnk1d) from Mus musculus (Mouse).